The sequence spans 534 residues: CTP synthase (534 aa).

The segment at 1-267 (MTKYIFVTGG…DQIVCDHLKL (267 aa)) is amidoligase domain. Ser13 lines the CTP pocket. Ser13 contributes to the UTP binding site. 14 to 19 (SIGKGI) provides a ligand contact to ATP. Tyr54 contacts L-glutamine. Residue Asp71 participates in ATP binding. Mg(2+) contacts are provided by Asp71 and Glu141. Residues 148 to 150 (DIE), 188 to 193 (KTKPTQ), and Lys224 each bind CTP. UTP contacts are provided by residues 188–193 (KTKPTQ) and Lys224. 240–242 (RDV) lines the ATP pocket. One can recognise a Glutamine amidotransferase type-1 domain in the interval 292-534 (KIALVGKYVE…FVTAAIKNSN (243 aa)). Gly354 serves as a coordination point for L-glutamine. Cys381 functions as the Nucleophile; for glutamine hydrolysis in the catalytic mechanism. L-glutamine is bound by residues 382–385 (LGMQ), Glu405, and Arg463. Residues His508 and Glu510 contribute to the active site.

The protein belongs to the CTP synthase family. As to quaternary structure, homotetramer.

The enzyme catalyses UTP + L-glutamine + ATP + H2O = CTP + L-glutamate + ADP + phosphate + 2 H(+). It catalyses the reaction L-glutamine + H2O = L-glutamate + NH4(+). The catalysed reaction is UTP + NH4(+) + ATP = CTP + ADP + phosphate + 2 H(+). It participates in pyrimidine metabolism; CTP biosynthesis via de novo pathway; CTP from UDP: step 2/2. Its activity is regulated as follows. Allosterically activated by GTP, when glutamine is the substrate; GTP has no effect on the reaction when ammonia is the substrate. The allosteric effector GTP functions by stabilizing the protein conformation that binds the tetrahedral intermediate(s) formed during glutamine hydrolysis. Inhibited by the product CTP, via allosteric rather than competitive inhibition. Functionally, catalyzes the ATP-dependent amination of UTP to CTP with either L-glutamine or ammonia as the source of nitrogen. Regulates intracellular CTP levels through interactions with the four ribonucleotide triphosphates. The protein is CTP synthase of Streptococcus pyogenes serotype M1.